The primary structure comprises 378 residues: Succinyl-diaminopimelate desuccinylase (378 aa).

Zn(2+) is bound at residue His68. Asp70 is an active-site residue. Residue Asp101 coordinates Zn(2+). Glu135 functions as the Proton acceptor in the catalytic mechanism. Residues Glu136, Glu164, and His350 each coordinate Zn(2+).

This sequence belongs to the peptidase M20A family. DapE subfamily. In terms of assembly, homodimer. It depends on Zn(2+) as a cofactor. Co(2+) serves as cofactor.

The catalysed reaction is N-succinyl-(2S,6S)-2,6-diaminopimelate + H2O = (2S,6S)-2,6-diaminopimelate + succinate. Its pathway is amino-acid biosynthesis; L-lysine biosynthesis via DAP pathway; LL-2,6-diaminopimelate from (S)-tetrahydrodipicolinate (succinylase route): step 3/3. Functionally, catalyzes the hydrolysis of N-succinyl-L,L-diaminopimelic acid (SDAP), forming succinate and LL-2,6-diaminopimelate (DAP), an intermediate involved in the bacterial biosynthesis of lysine and meso-diaminopimelic acid, an essential component of bacterial cell walls. The sequence is that of Succinyl-diaminopimelate desuccinylase from Vibrio parahaemolyticus serotype O3:K6 (strain RIMD 2210633).